Consider the following 235-residue polypeptide: MRFDLITLFPEFFHSPLQSGLIAKAIAKGLAEVHCTNPRDFTCDRHHKVDDEPYGGGAGMVLKPEPLAAALESLPVVTPRQVIYLSPQGEPMTQALFQDLATSVEQLVLVCGHYEGIDERVMTWIDREISLGDFVLTCGEIPALALLNGVLRLRPGTIGKEESHRCDSFSDGLLDYPHYTRPAEFRGLKVPEVLLSGNHGAIAAWRRQQQLERTRDRRPDLYQAWQAQQSDLDSH.

S-adenosyl-L-methionine contacts are provided by residues glycine 112 and 131–136 (LGDFVL).

It belongs to the RNA methyltransferase TrmD family. As to quaternary structure, homodimer.

It localises to the cytoplasm. The catalysed reaction is guanosine(37) in tRNA + S-adenosyl-L-methionine = N(1)-methylguanosine(37) in tRNA + S-adenosyl-L-homocysteine + H(+). Functionally, specifically methylates guanosine-37 in various tRNAs. This is tRNA (guanine-N(1)-)-methyltransferase from Synechococcus elongatus (strain ATCC 33912 / PCC 7942 / FACHB-805) (Anacystis nidulans R2).